The sequence spans 455 residues: Epoxide hydrolase 1 (455 aa).

A helical; Signal-anchor for type III membrane protein transmembrane segment spans residues 1–21; the sequence is MWLELVLASLLGFVIYWFVSR. The Cytoplasmic portion of the chain corresponds to 22–455; the sequence is DKEETLPLGD…RKFVSLAELQ (434 aa). Catalysis depends on aspartate 226, which acts as the Nucleophile. The residue at position 295 (arginine 295) is a Dimethylated arginine. Tyrosine 374 functions as the Proton donor in the catalytic mechanism. The Proton acceptor role is filled by histidine 431. Lysine 439 carries the N6-acetyllysine modification.

The protein belongs to the peptidase S33 family.

It is found in the microsome membrane. The protein resides in the endoplasmic reticulum membrane. The catalysed reaction is cis-stilbene oxide + H2O = (1R,2R)-hydrobenzoin. It catalyses the reaction 1-(4-methoxyphenyl)-N-methyl-N-[(3-methyloxetan-3-yl)methyl]methanamine + H2O = 2-{[(4-methoxybenzyl)(methyl)amino]methyl}-2-methylpropane-1,3-diol. The enzyme catalyses 8,9-epoxy-(5Z,11Z,14Z)-eicosatrienoate + H2O = 8,9-dihydroxy-(5Z,11Z,14Z)-eicosatrienoate. It carries out the reaction 11,12-epoxy-(5Z,8Z,14Z)-eicosatrienoate + H2O = 11,12-dihydroxy-(5Z,8Z,14Z)-eicosatrienoate. The catalysed reaction is 2-(5Z,8Z,11Z,14Z-eicosatetraenoyl)-glycerol + H2O = glycerol + (5Z,8Z,11Z,14Z)-eicosatetraenoate + H(+). With respect to regulation, inhibited by 10-hydroxystearamide and methoxy-arachidonyl fluorophosphate. In terms of biological role, biotransformation enzyme that catalyzes the hydrolysis of arene and aliphatic epoxides to less reactive and more water soluble dihydrodiols by the trans addition of water. May play a role in the metabolism of endogenous lipids such as epoxide-containing fatty acids. Metabolizes the abundant endocannabinoid 2-arachidonoylglycerol (2-AG) to free arachidonic acid (AA) and glycerol. Binds 20(S)-hydroxycholesterol (20(S)-OHC). This is Epoxide hydrolase 1 from Rattus norvegicus (Rat).